Consider the following 66-residue polypeptide: Brevinin-1DYb (66 aa).

A signal peptide spans 1–22 (MFTLKKSLLLLFFLGTISLSLC). A propeptide spanning residues 23-44 (EEERNAEEERRDYPEERDVEVE) is cleaved from the precursor. C60 and C66 are joined by a disulfide.

Expressed by the skin glands.

The protein resides in the secreted. Antimicrobial peptide. Has low activity against the Gram-positive bacterium S.aureus and the Gram-negative bacterium E.coli (MIC&lt;15 uM). Has a strong hemolytic activity. The chain is Brevinin-1DYb from Rana dybowskii (Dybovsky's frog).